Reading from the N-terminus, the 803-residue chain is Ubiquitin carboxyl-terminal hydrolase 45 (803 aa).

Positions 1–34 (MRLKDPFSLKTADMTKRSNKPKKPRDEDSSDEVG) are disordered. A UBP-type zinc finger spans residues 36-153 (LTCQHVSRAV…QTLDFLQKQS (118 aa)). Residues Cys38, His40, Cys62, Cys65, Cys85, Cys88, Cys93, His100, His104, His113, Cys126, and Cys129 each contribute to the Zn(2+) site. The USP domain occupies 192–802 (KGINNLGNTC…QAYLLFYEEL (611 aa)). Cys201 serves as the catalytic Nucleophile. A disordered region spans residues 394 to 554 (PTNPARLGKS…LPSIRPQQGG (161 aa)). Residues 403–417 (SGREQDSLTSHDDSL) are compositionally biased toward basic and acidic residues. Composition is skewed to polar residues over residues 419 to 440 (AHSQANRNSRRLSGQKLQSRHS) and 469 to 480 (SYRTDTMGSQSD). The span at 502–531 (SEWSPRIPSVSSHSSTSDKTSITTTLSTTT) shows a compositional bias: low complexity. The span at 532–545 (HNPSLKSNPSSTPL) shows a compositional bias: polar residues. His739 serves as the catalytic Proton acceptor.

It belongs to the peptidase C19 family. As to expression, retina.

Its subcellular location is the photoreceptor inner segment. The protein localises to the cytoplasm. The protein resides in the nucleus. It carries out the reaction Thiol-dependent hydrolysis of ester, thioester, amide, peptide and isopeptide bonds formed by the C-terminal Gly of ubiquitin (a 76-residue protein attached to proteins as an intracellular targeting signal).. Its function is as follows. Catalyzes the deubiquitination of SPDL1. Plays a role in the repair of UV-induced DNA damage via deubiquitination of ERCC1, promoting its recruitment to DNA damage sites. May be involved in the maintenance of photoreceptor function. May play a role in normal retinal development. The chain is Ubiquitin carboxyl-terminal hydrolase 45 from Danio rerio (Zebrafish).